The primary structure comprises 144 residues: Ribosome-binding factor A (144 aa).

Residues 120–144 (DKRRMAESGREEDDAAPDETTEDNA) are disordered. A compositionally biased stretch (acidic residues) spans 129–144 (REEDDAAPDETTEDNA).

Belongs to the RbfA family. As to quaternary structure, monomer. Binds 30S ribosomal subunits, but not 50S ribosomal subunits or 70S ribosomes.

It is found in the cytoplasm. One of several proteins that assist in the late maturation steps of the functional core of the 30S ribosomal subunit. Associates with free 30S ribosomal subunits (but not with 30S subunits that are part of 70S ribosomes or polysomes). Required for efficient processing of 16S rRNA. May interact with the 5'-terminal helix region of 16S rRNA. The polypeptide is Ribosome-binding factor A (Aeromonas hydrophila subsp. hydrophila (strain ATCC 7966 / DSM 30187 / BCRC 13018 / CCUG 14551 / JCM 1027 / KCTC 2358 / NCIMB 9240 / NCTC 8049)).